Reading from the N-terminus, the 32-residue chain is MKAILQVINLVLISVVVIIIPPCGAALGRRKA.

This Yersinia pestis protein is ilv operon leader peptide (ilvL).